The primary structure comprises 499 residues: Tektin-like protein 1 (499 aa).

Phosphoserine is present on Ser-14. The stretch at 201 to 225 forms a coiled coil; it reads WEKKELKSMKRKMEKDMEISEDLLK. The disordered stretch occupies residues 265-286; sequence VDITRPPTPRTQGLKTPPPDPI. Residues 308–328 are a coiled coil; that stretch reads KDILTEMAKNEVDIQNQQQEI. Tyr-372 is modified (phosphotyrosine).

As to quaternary structure, microtubule inner protein component of sperm flagellar doublet microtubules.

It localises to the cytoplasm. It is found in the cytoskeleton. Its subcellular location is the flagellum axoneme. Functionally, microtubule inner protein (MIP) part of the dynein-decorated doublet microtubules (DMTs) in sperm flagellar axoneme, which is required for motile flagellum beating. Forms an extensive interaction network cross-linking the lumen of axonemal doublet microtubules. This chain is Tektin-like protein 1, found in Mus musculus (Mouse).